A 252-amino-acid chain; its full sequence is Chitooligosaccharide deacetylase (252 aa).

Residues histidine 61 and histidine 125 each contribute to the Mg(2+) site.

It belongs to the YdjC deacetylase family. ChbG subfamily. In terms of assembly, homodimer. Mg(2+) serves as cofactor.

The protein resides in the cytoplasm. It carries out the reaction N,N'-diacetylchitobiose + H2O = N-acetyl-beta-D-glucosaminyl-(1-&gt;4)-D-glucosamine + acetate. The enzyme catalyses diacetylchitobiose-6'-phosphate + H2O = N'-monoacetylchitobiose-6'-phosphate + acetate. Its pathway is glycan degradation; chitin degradation. Involved in the degradation of chitin. ChbG is essential for growth on the acetylated chitooligosaccharides chitobiose and chitotriose but is dispensable for growth on cellobiose and chitosan dimer, the deacetylated form of chitobiose. Deacetylation of chitobiose-6-P and chitotriose-6-P is necessary for both the activation of the chb promoter by the regulatory protein ChbR and the hydrolysis of phosphorylated beta-glucosides by the phospho-beta-glucosidase ChbF. Catalyzes the removal of only one acetyl group from chitobiose-6-P to yield monoacetylchitobiose-6-P, the inducer of ChbR and the substrate of ChbF. In Escherichia coli O139:H28 (strain E24377A / ETEC), this protein is Chitooligosaccharide deacetylase.